A 217-amino-acid polypeptide reads, in one-letter code: UPF0319 protein HSM_0266 (217 aa).

Residues 1–21 (MKFSFAALASAMLLTSTAAFA) form the signal peptide.

Belongs to the UPF0319 family.

This is UPF0319 protein HSM_0266 from Histophilus somni (strain 2336) (Haemophilus somnus).